A 557-amino-acid polypeptide reads, in one-letter code: Aspartate--tRNA ligase, cytoplasmic (557 aa).

Basic and acidic residues predominate over residues 1-12; it reads MSQDENIVKAVE. Residues 1–74 form a disordered region; the sequence is MSQDENIVKA…AAAEDTAKDN (74 aa). Serine 2 carries the post-translational modification N-acetylserine. Residue serine 14 is modified to Phosphoserine. A compositionally biased stretch (basic and acidic residues) spans 37-74; it reads LQKEQEKQRKKEERALQLEAEREAREKKAAAEDTAKDN. L-aspartate is bound at residue glutamate 281. Serine 301 is modified (phosphoserine). The aspartate stretch occupies residues 303-306; it reads QFNK. An L-aspartate-binding site is contributed by arginine 325. ATP contacts are provided by residues 325–327, 333–335, and glutamate 478; these read RAE and RHM. Serine 481 and arginine 485 together coordinate L-aspartate. Serine 502 is modified (phosphoserine). ATP is bound at residue 528–531; the sequence is GLER. Position 546 is a phosphoserine (serine 546).

Belongs to the class-II aminoacyl-tRNA synthetase family. Type 2 subfamily. In terms of assembly, homodimer.

The protein resides in the cytoplasm. The enzyme catalyses tRNA(Asp) + L-aspartate + ATP = L-aspartyl-tRNA(Asp) + AMP + diphosphate. This Saccharomyces cerevisiae (strain ATCC 204508 / S288c) (Baker's yeast) protein is Aspartate--tRNA ligase, cytoplasmic (DPS1).